Consider the following 160-residue polypeptide: Biogenesis of lysosome-related organelles complex 1 subunit 5 (160 aa).

Belongs to the BLOC1S5 family. As to quaternary structure, component of the biogenesis of lysosome-related organelles complex-1 (BLOC-1) composed of Blos1, Blos2, Blos3, Blos4, Dysb, Muted, Pldn and Snapin.

Functionally, component of the biogenesis of lysosome-related organelles complex-1 (BLOC-1) involved in pigment granule biogenesis. This chain is Biogenesis of lysosome-related organelles complex 1 subunit 5, found in Drosophila melanogaster (Fruit fly).